We begin with the raw amino-acid sequence, 220 residues long: Fibroblast growth factor 3 (220 aa).

Residues 1–19 form the signal peptide; it reads MLVIWLLLLALLPEPRVPA. Positions 19 to 40 are disordered; sequence AATASPRAPRDAGGRGGVYEHL. A glycan (N-linked (GlcNAc...) asparagine) is linked at asparagine 66.

This sequence belongs to the heparin-binding growth factors family.

Its subcellular location is the secreted. Plays an important role in the regulation of embryonic development, cell proliferation, and cell differentiation. The sequence is that of Fibroblast growth factor 3 (FGF3) from Gallus gallus (Chicken).